A 354-amino-acid chain; its full sequence is Small ribosomal subunit protein uS2 (354 aa).

It belongs to the universal ribosomal protein uS2 family.

The chain is Small ribosomal subunit protein uS2 from Methylorubrum populi (strain ATCC BAA-705 / NCIMB 13946 / BJ001) (Methylobacterium populi).